Consider the following 261-residue polypeptide: UPF0246 protein AZOSEA34360 (261 aa).

Belongs to the UPF0246 family.

This Aromatoleum aromaticum (strain DSM 19018 / LMG 30748 / EbN1) (Azoarcus sp. (strain EbN1)) protein is UPF0246 protein AZOSEA34360.